A 496-amino-acid chain; its full sequence is Stomatal closure-related actin-binding protein 1 (496 aa).

Residues 126 to 269 (RNKDDVEEAI…FLQLQKKLAM (144 aa)) adopt a coiled-coil conformation.

This sequence belongs to the SCAB family. As to quaternary structure, dimer. Dimerization is required for actin-binding activity. Expressed in roots, stems, leaves, flowers, siliques and guard cells.

Its subcellular location is the cytoplasm. It is found in the cytoskeleton. In terms of biological role, plant-specific actin binding protein that bundles and stabilizes microfilaments (MFs). Has no nucleation or capping activity. Regulates MF reorganization during stomatal closure. The binding to F-actin is insensitive to Ca(2+) and pH. Binds weakly to inositol phosphates. The protein is Stomatal closure-related actin-binding protein 1 of Arabidopsis thaliana (Mouse-ear cress).